Reading from the N-terminus, the 67-residue chain is Gallinacin-6 (67 aa).

Positions 1–19 (MRILYLLLSVLFVVLQGVA) are cleaved as a signal peptide. The propeptide occupies 20–25 (GQPYFS). 3 cysteine pairs are disulfide-bonded: Cys31–Cys60, Cys38–Cys53, and Cys43–Cys61.

Belongs to the beta-defensin family. As to expression, expressed in bone marrow, testis, ovary, lung and trachea. Expressed in the ovarian stroma, but not in the ovarian follicles.

It is found in the secreted. It localises to the cytoplasmic granule. Functionally, has bactericidal activity. Potent activity against S.typhimurium and S.entiriditis. This chain is Gallinacin-6 (GAL6), found in Gallus gallus (Chicken).